A 429-amino-acid chain; its full sequence is Enolase (429 aa).

Residue Q163 coordinates (2R)-2-phosphoglycerate. E205 functions as the Proton donor in the catalytic mechanism. Residues D242, E287, and D314 each contribute to the Mg(2+) site. K339, R368, S369, and K390 together coordinate (2R)-2-phosphoglycerate. The active-site Proton acceptor is the K339.

Belongs to the enolase family. Requires Mg(2+) as cofactor.

Its subcellular location is the cytoplasm. The protein resides in the secreted. It is found in the cell surface. The catalysed reaction is (2R)-2-phosphoglycerate = phosphoenolpyruvate + H2O. Its pathway is carbohydrate degradation; glycolysis; pyruvate from D-glyceraldehyde 3-phosphate: step 4/5. Its function is as follows. Catalyzes the reversible conversion of 2-phosphoglycerate (2-PG) into phosphoenolpyruvate (PEP). It is essential for the degradation of carbohydrates via glycolysis. The sequence is that of Enolase from Salinibacter ruber (strain DSM 13855 / M31).